Consider the following 1210-residue polypeptide: ATPase family AAA domain-containing protein At1g05910 (1210 aa).

Residues 1 to 11 are compositionally biased toward polar residues; sequence MHPKRSSQGDG. Disordered regions lie at residues 1 to 32 and 63 to 291; these read MHPK…LHGR and LHKG…RTDD. The segment covering 97-109 has biased composition (acidic residues); sequence DYTDSSGAEDEDM. Over residues 130 to 146 the composition is skewed to basic and acidic residues; that stretch reads SRKDMDAELAPRREGLR. Residues 167–226 show a composition bias toward acidic residues; it reads DTSEEKDGQDETENGNELDDADDGENEVEAEDEGNGEDEGDGEDEGEEDGDDDEEGDEEQ. Basic and acidic residues predominate over residues 227–244; sequence EGRKRYDLRNRAEVRRMP. The segment covering 276 to 286 has biased composition (basic residues); that stretch reads GGSRPHKRHRF. Residue 422–429 participates in ATP binding; the sequence is GPPGTGKT. Residues 856–883 form a disordered region; the sequence is LNGKPDGPQPLPELPKVPKEPTGPKPAE. The 104-residue stretch at 897-1000 folds into the Bromo domain; sequence RLRMCLRDVC…DVVHGMLSQM (104 aa). Residues 1057–1070 are compositionally biased toward basic and acidic residues; that stretch reads DRDYEGLKKPKKTT. The tract at residues 1057-1151 is disordered; sequence DRDYEGLKKP…EISSRTESVK (95 aa). The segment covering 1080-1090 has biased composition (polar residues); sequence DKSQNQDSGQE. 2 stretches are compositionally biased toward basic and acidic residues: residues 1108-1123 and 1138-1151; these read DGDR…KEAS and KSDK…ESVK.

This sequence belongs to the AAA ATPase family.

The chain is ATPase family AAA domain-containing protein At1g05910 from Arabidopsis thaliana (Mouse-ear cress).